Reading from the N-terminus, the 126-residue chain is Lymphocyte antigen 6E (126 aa).

The N-terminal stretch at 1–20 is a signal peptide; that stretch reads MKAFLFAVLAAVLCVERAHT. In terms of domain architecture, UPAR/Ly6 spans 21–98; the sequence is LICFSCSDAS…CCDSFLCNIS (78 aa). Disulfide bonds link Cys-23-Cys-48, Cys-26-Cys-35, Cys-41-Cys-69, Cys-73-Cys-89, and Cys-90-Cys-95. Asn-96 carries N-linked (GlcNAc...) asparagine glycosylation. A lipid anchor (GPI-anchor amidated serine) is attached at Ser-98. Residues 99–126 constitute a propeptide, removed in mature form; sequence GSSSVKASYAVLALGILVSFVYVLRARE.

Expressed by thymic blast cells.

It is found in the cell membrane. In Gallus gallus (Chicken), this protein is Lymphocyte antigen 6E (LY6E).